The sequence spans 378 residues: 2-aminoethylphosphonate--pyruvate transaminase 1 (378 aa).

At Lys194 the chain carries N6-(pyridoxal phosphate)lysine.

The protein belongs to the class-V pyridoxal-phosphate-dependent aminotransferase family. PhnW subfamily. In terms of assembly, homodimer. Pyridoxal 5'-phosphate serves as cofactor.

It carries out the reaction (2-aminoethyl)phosphonate + pyruvate = phosphonoacetaldehyde + L-alanine. Its function is as follows. Involved in phosphonate degradation. In Cupriavidus pinatubonensis (strain JMP 134 / LMG 1197) (Cupriavidus necator (strain JMP 134)), this protein is 2-aminoethylphosphonate--pyruvate transaminase 1.